A 185-amino-acid polypeptide reads, in one-letter code: Elongation factor P (185 aa).

The protein belongs to the elongation factor P family.

It is found in the cytoplasm. It participates in protein biosynthesis; polypeptide chain elongation. Functionally, involved in peptide bond synthesis. Stimulates efficient translation and peptide-bond synthesis on native or reconstituted 70S ribosomes in vitro. Probably functions indirectly by altering the affinity of the ribosome for aminoacyl-tRNA, thus increasing their reactivity as acceptors for peptidyl transferase. The chain is Elongation factor P from Bordetella avium (strain 197N).